A 174-amino-acid polypeptide reads, in one-letter code: Protein GrpE (174 aa).

It belongs to the GrpE family. Homodimer.

It localises to the cytoplasm. Participates actively in the response to hyperosmotic and heat shock by preventing the aggregation of stress-denatured proteins, in association with DnaK and GrpE. It is the nucleotide exchange factor for DnaK and may function as a thermosensor. Unfolded proteins bind initially to DnaJ; upon interaction with the DnaJ-bound protein, DnaK hydrolyzes its bound ATP, resulting in the formation of a stable complex. GrpE releases ADP from DnaK; ATP binding to DnaK triggers the release of the substrate protein, thus completing the reaction cycle. Several rounds of ATP-dependent interactions between DnaJ, DnaK and GrpE are required for fully efficient folding. This is Protein GrpE from Pseudothermotoga lettingae (strain ATCC BAA-301 / DSM 14385 / NBRC 107922 / TMO) (Thermotoga lettingae).